Reading from the N-terminus, the 67-residue chain is Conotoxin Cl6.8 (67 aa).

Residues methionine 1 to alanine 22 form the signal peptide. A propeptide spanning residues asparagine 23–serine 39 is cleaved from the precursor. Disulfide bonds link cysteine 43-cysteine 58, cysteine 50-cysteine 62, and cysteine 57-cysteine 66. Cysteine 66 carries the cysteine amide modification.

The protein belongs to the conotoxin O1 superfamily. Expressed by the venom duct.

It is found in the secreted. The protein is Conotoxin Cl6.8 of Californiconus californicus (California cone).